The sequence spans 90 residues: Essential MCU regulator, mitochondrial (90 aa).

A helical transmembrane segment spans residues glycine 49–alanine 68.

Belongs to the SMDT1/EMRE family.

It is found in the mitochondrion inner membrane. Functionally, essential regulatory subunit of the mitochondrial calcium uniporter (mcu-1) channel, a protein that mediates calcium uptake into mitochondria. The sequence is that of Essential MCU regulator, mitochondrial from Caenorhabditis elegans.